The following is a 592-amino-acid chain: Inactive metallocarboxypeptidase ECM14 (592 aa).

The signal sequence occupies residues M1–A21. Positions I22–S174 are excised as a propeptide. Positions S170–T179 are enriched in polar residues. Residues S170–S191 are disordered. The region spanning D202–L521 is the Peptidase M14 domain. H264 and E267 together coordinate Zn(2+). Residues H264–E267, R322, and D339–R340 contribute to the substrate site. Residues C333 and C356 are joined by a disulfide bond. An N-linked (GlcNAc...) asparagine glycan is attached at N349. H396 lines the Zn(2+) pocket. Position 397-398 (S397–Y398) interacts with substrate. The tract at residues A542–R592 is disordered. Acidic residues predominate over residues D548–G558. A compositionally biased stretch (basic and acidic residues) spans Q559–N575.

It belongs to the peptidase M14 family. Zn(2+) serves as cofactor.

Its subcellular location is the vacuole. The protein resides in the secreted. Functionally, inactive carboxypeptidase that may play a role in cell wall organization and biogenesis. The sequence is that of Inactive metallocarboxypeptidase ECM14 (ECM14) from Blastomyces gilchristii (strain SLH14081) (Blastomyces dermatitidis).